A 397-amino-acid chain; its full sequence is Elongation factor Tu (397 aa).

Residues 10-207 (KPHVNVGTIG…TLDSYIPEPV (198 aa)) form the tr-type G domain. Residues 19–26 (GHVDHGKT) form a G1 region. A GTP-binding site is contributed by 19–26 (GHVDHGKT). Thr26 provides a ligand contact to Mg(2+). The G2 stretch occupies residues 60 to 64 (GITIN). At Tyr77 the chain carries Phosphotyrosine. Positions 81–84 (DCPG) are G3. GTP is bound at residue 81–85 (DCPGH). Residue Tyr88 is modified to Phosphotyrosine. GTP is bound at residue 136–139 (NKAD). Residues 136-139 (NKAD) form a G4 region. Positions 174-176 (SAL) are G5.

Belongs to the TRAFAC class translation factor GTPase superfamily. Classic translation factor GTPase family. EF-Tu/EF-1A subfamily. As to quaternary structure, monomer.

The protein resides in the cytoplasm. The catalysed reaction is GTP + H2O = GDP + phosphate + H(+). GTP hydrolase that promotes the GTP-dependent binding of aminoacyl-tRNA to the A-site of ribosomes during protein biosynthesis. The sequence is that of Elongation factor Tu from Pseudomonas aeruginosa (strain UCBPP-PA14).